The primary structure comprises 367 residues: CCN family member 4 (367 aa).

A signal peptide spans 1-22 (MRWLLPWTLAAVAVLRVGNILA). The IGFBP N-terminal domain occupies 45–118 (RPEFCKWPCE…RYAIGVCAQV (74 aa)). Disulfide bonds link Cys49–Cys73, Cys53–Cys75, Cys55–Cys76, and Cys62–Cys79. N-linked (GlcNAc...) asparagine glycosylation is present at Asn86. Disulfide bonds link Cys87/Cys101 and Cys93/Cys115. Residues 121-186 (VGCVLDGVRY…GQCCEQWVCD (66 aa)) form the VWFC domain. An N-linked (GlcNAc...) asparagine glycan is attached at Asn143. Residues 215–260 (NCIAYTSPWSPCSTTCGLGISTRISNVNARCWPEQESRLCNLRPCD) form the TSP type-1 domain. 5 disulfide bridges follow: Cys273–Cys310, Cys290–Cys324, Cys301–Cys340, Cys304–Cys342, and Cys309–Cys346. One can recognise a CTCK domain in the interval 273 to 347 (CLAVYQPEEA…NACFCNLSCR (75 aa)). An N-linked (GlcNAc...) asparagine glycan is attached at Asn284. N-linked (GlcNAc...) asparagine glycosylation is present at Asn343.

The protein belongs to the CCN family. In terms of tissue distribution, highly expressed in kidney and lung. Lower levels in heart, brain, spleen, liver, skeletal muscle and testis. Expressed in low metastatic melanoma cells.

It is found in the secreted. Its function is as follows. Downstream regulator in the Wnt/Frizzled-signaling pathway. Associated with cell survival. Adheres to skin and melanoma fibroblasts. In vitro binding to skin fibroblasts occurs through the proteoglycans, decorin and biglycan. Suppresses tumor growth in vivo. This Mus musculus (Mouse) protein is CCN family member 4 (Ccn4).